The primary structure comprises 266 residues: Ribonuclease 3 (266 aa).

One can recognise an RNase III domain in the interval 34–158; the sequence is IERCQEILGY…VIAALYIDGG (125 aa). E72 lines the Mg(2+) pocket. D76 is a catalytic residue. The Mg(2+) site is built by D144 and E147. Residue E147 is part of the active site. A DRBM domain is found at 185 to 254; that stretch reads NHKSVLQQFA…AANALAELHN (70 aa).

Belongs to the ribonuclease III family. As to quaternary structure, homodimer. Mg(2+) is required as a cofactor.

The protein resides in the cytoplasm. The catalysed reaction is Endonucleolytic cleavage to 5'-phosphomonoester.. Digests double-stranded RNA. Involved in the processing of primary rRNA transcript to yield the immediate precursors to the large and small rRNAs (23S and 16S). Processes some mRNAs, and tRNAs when they are encoded in the rRNA operon. Processes pre-crRNA and tracrRNA of type II CRISPR loci if present in the organism. This is Ribonuclease 3 from Rhodopirellula baltica (strain DSM 10527 / NCIMB 13988 / SH1).